The following is a 661-amino-acid chain: Zeaxanthin epoxidase, chloroplastic (661 aa).

The transit peptide at 1–59 (MLLFRATLLPSPPFFHKTYFSHLSPVIFSDDPLPVSLQRNRVSGCRKQKWRQIRTLALQ) directs the protein to the chloroplast. Residues 81 to 109 (RILI…LVFE) and 359 to 372 (IFTW…LLGD) each bind FAD. The FHA domain maps to 555–609 (HIIGSISHDDSEGISIHLPFPQVHKTHARIACKDNIFYLTDLQSQYGTWITDNEG).

Requires FAD as cofactor. As to expression, expressed in flower buds, lips and leaves. Detected in roots.

The protein localises to the plastid. The protein resides in the chloroplast. It catalyses the reaction all-trans-zeaxanthin + 4 reduced [2Fe-2S]-[ferredoxin] + 2 O2 + 4 H(+) = all-trans-violaxanthin + 4 oxidized [2Fe-2S]-[ferredoxin] + 2 H2O. Its pathway is plant hormone biosynthesis; abscisate biosynthesis. Zeaxanthin epoxidase that plays an important role in the xanthophyll cycle and abscisic acid (ABA) biosynthesis. Converts zeaxanthin into antheraxanthin and subsequently violaxanthin. The sequence is that of Zeaxanthin epoxidase, chloroplastic (ZEP) from Oncidium hybrid cultivar (Orchid).